We begin with the raw amino-acid sequence, 293 residues long: Ethanolamine ammonia-lyase small subunit (293 aa).

Adenosylcob(III)alamin contacts are provided by V207 and E228.

This sequence belongs to the EutC family. As to quaternary structure, the basic unit is a heterodimer which dimerizes to form tetramers. The heterotetramers trimerize; 6 large subunits form a core ring with 6 small subunits projecting outwards. Requires adenosylcob(III)alamin as cofactor.

It localises to the bacterial microcompartment. The catalysed reaction is ethanolamine = acetaldehyde + NH4(+). Its pathway is amine and polyamine degradation; ethanolamine degradation. Catalyzes the deamination of various vicinal amino-alcohols to oxo compounds. Allows this organism to utilize ethanolamine as the sole source of nitrogen and carbon in the presence of external vitamin B12. The chain is Ethanolamine ammonia-lyase small subunit from Clostridioides difficile (strain 630) (Peptoclostridium difficile).